A 501-amino-acid chain; its full sequence is Phosphatase and actin regulator 1 (501 aa).

An RPEL 1 repeat occupies 1–18; that stretch reads MRQSREELIKRGVLKEIF. Disordered regions lie at residues 21 to 46 and 295 to 329; these read DGEL…QVLS and DNKE…EDNS. Residues 36-46 are compositionally biased toward low complexity; sequence GQPLGSGQVLS. The span at 295-304 shows a compositional bias: basic and acidic residues; it reads DNKENVPHEA. The span at 317-328 shows a compositional bias: acidic residues; that stretch reads EEEEEEDEDEDN. 3 RPEL repeats span residues 343–368, 381–406, and 419–444; these read DSLA…PMQT, TKLT…KPRN, and RRLT…IRFS. The interval 382–415 is disordered; sequence KLTRRLSQRPTAEELEQRNILKPRNEQEEQEEKR. The segment covering 392 to 415 has biased composition (basic and acidic residues); sequence TAEELEQRNILKPRNEQEEQEEKR.

It belongs to the phosphatase and actin regulator family. In terms of assembly, interacts (via RPEL repeats) with ACTA1. Expressed in the gizzard, and in neurons from central and peripheral nervous systems.

It localises to the cytoplasm. It is found in the synapse. Its subcellular location is the nucleus. In terms of biological role, binds actin monomers (G actin) and plays a role in the reorganization of the actin cytoskeleton and in formation of actin stress fibers. The sequence is that of Phosphatase and actin regulator 1 (PHACTR1) from Gallus gallus (Chicken).